We begin with the raw amino-acid sequence, 107 residues long: UPF0473 protein LACR_0139 (107 aa).

The protein belongs to the UPF0473 family.

This chain is UPF0473 protein LACR_0139, found in Lactococcus lactis subsp. cremoris (strain SK11).